The primary structure comprises 207 residues: Large ribosomal subunit protein uL4 (207 aa).

Positions 44–58 (RAPTRATRERSDVAR) are enriched in basic and acidic residues. Positions 44-82 (RAPTRATRERSDVARSGKKFGRQKGGGTARHGDRRSPIF) are disordered.

It belongs to the universal ribosomal protein uL4 family. Part of the 50S ribosomal subunit.

Its function is as follows. One of the primary rRNA binding proteins, this protein initially binds near the 5'-end of the 23S rRNA. It is important during the early stages of 50S assembly. It makes multiple contacts with different domains of the 23S rRNA in the assembled 50S subunit and ribosome. In terms of biological role, forms part of the polypeptide exit tunnel. This Zymomonas mobilis subsp. mobilis (strain ATCC 31821 / ZM4 / CP4) protein is Large ribosomal subunit protein uL4.